A 139-amino-acid polypeptide reads, in one-letter code: uncharacterized protein (139 aa).

The segment at 54 to 75 is disordered; that stretch reads NSLHRHGDQAWGKHRRQNSLKS.

This is an uncharacterized protein from Homo sapiens (Human).